A 555-amino-acid polypeptide reads, in one-letter code: Chaperonin GroEL (555 aa).

Residues 29 to 32 (TLGP), K50, 86 to 90 (DGTTT), G418, and D499 each bind ATP. The interval 528 to 555 (HEEDNNTGNRSGGGVGGGHHGGMGGMDF) is disordered. A compositionally biased stretch (gly residues) spans 537–555 (RSGGGVGGGHHGGMGGMDF).

It belongs to the chaperonin (HSP60) family. In terms of assembly, forms a cylinder of 14 subunits composed of two heptameric rings stacked back-to-back. Interacts with the co-chaperonin GroES.

It is found in the cytoplasm. It carries out the reaction ATP + H2O + a folded polypeptide = ADP + phosphate + an unfolded polypeptide.. Together with its co-chaperonin GroES, plays an essential role in assisting protein folding. The GroEL-GroES system forms a nano-cage that allows encapsulation of the non-native substrate proteins and provides a physical environment optimized to promote and accelerate protein folding. This is Chaperonin GroEL from Orientia tsutsugamushi (strain Ikeda) (Rickettsia tsutsugamushi).